Consider the following 128-residue polypeptide: Small ribosomal subunit protein eS8 (128 aa).

The protein belongs to the eukaryotic ribosomal protein eS8 family. In terms of assembly, part of the 30S ribosomal subunit.

The protein is Small ribosomal subunit protein eS8 of Methanococcus vannielii (strain ATCC 35089 / DSM 1224 / JCM 13029 / OCM 148 / SB).